Consider the following 469-residue polypeptide: Reticulon-2 (469 aa).

2 disordered regions span residues 1 to 180 (MGQV…EASE) and 201 to 238 (LTPQ…NGEG). A compositionally biased stretch (low complexity) spans 14-25 (APSTASSTPDST). The span at 32–43 (SDFRELHTAREF) shows a compositional bias: basic and acidic residues. S44 carries the phosphoserine modification. The span at 135 to 144 (RPLEELRLRL) shows a compositional bias: basic and acidic residues. 2 stretches are compositionally biased toward polar residues: residues 159–168 (DSATSSSTPL) and 203–226 (PQLS…QDLN). One can recognise a Reticulon domain in the interval 270 to 469 (VADLLYWKDT…SVSGSKAKAE (200 aa)). 2 helical membrane passes run 293–313 (LLCL…LLGL) and 388–408 (LLFY…LVIL).

Interacts with SPAST. Interacts with BACE1. Interacts (via first transmembrane domain) with ARL6IP5/GTRAP3-18. Interacts (via N-terminus) with SLC1A1/EAAC1; the interaction promotes cell surface expression of SLC1A1. Expressed in brain and spinal cord (at protein level). In the embryonic brain cortex, expressed in neurons but not in astrocytes (at protein level).

The protein resides in the endoplasmic reticulum membrane. Its subcellular location is the sarcoplasmic reticulum membrane. It is found in the cell membrane. It localises to the sarcolemma. The protein localises to the T-tubule. The protein resides in the cytoplasm. Its subcellular location is the myofibril. It is found in the sarcomere. It localises to the z line. The protein localises to the cytoskeleton. Inhibits amyloid precursor protein processing, probably by blocking BACE1 activity. Enhances trafficking of the glutamate transporter SLC1A1/EAAC1 from the endoplasmic reticulum to the cell surface. Plays a role in the translocation of SLC2A4/GLUT4 from intracellular membranes to the cell membrane which facilitates the uptake of glucose into the cell. This Rattus norvegicus (Rat) protein is Reticulon-2.